The chain runs to 294 residues: Tyrosine recombinase XerC (294 aa).

The Core-binding (CB) domain occupies 1-85 (MSRLVEDFFA…ACRGFYTWLV (85 aa)). A Tyr recombinase domain is found at 106 to 283 (KLPRILDADE…DFQYLSKVYD (178 aa)). Residues R145, K169, H235, R238, and H261 contribute to the active site. The O-(3'-phospho-DNA)-tyrosine intermediate role is filled by Y270.

Belongs to the 'phage' integrase family. XerC subfamily. As to quaternary structure, forms a cyclic heterotetrameric complex composed of two molecules of XerC and two molecules of XerD.

It is found in the cytoplasm. Site-specific tyrosine recombinase, which acts by catalyzing the cutting and rejoining of the recombining DNA molecules. The XerC-XerD complex is essential to convert dimers of the bacterial chromosome into monomers to permit their segregation at cell division. It also contributes to the segregational stability of plasmids. In Xylella fastidiosa (strain M23), this protein is Tyrosine recombinase XerC.